A 180-amino-acid polypeptide reads, in one-letter code: MSLDKTTIAKRYSKALFEIVSEKGQRDETRAELNQIQQVFNDNEGLGKILTDKGLEQNQKLEILNILTKDASNYVGNLIKMTFDYGRMDYLTAIIDEFNNLCDADEKIVRAKVVSAIPLSDQQLDKMAEQFAKRLKVSEVVLDSEVDDSIIGGAIIKTDSLIYDGSIQTQINQIRQRLIG.

It belongs to the ATPase delta chain family. As to quaternary structure, F-type ATPases have 2 components, F(1) - the catalytic core - and F(0) - the membrane proton channel. F(1) has five subunits: alpha(3), beta(3), gamma(1), delta(1), epsilon(1). F(0) has three main subunits: a(1), b(2) and c(10-14). The alpha and beta chains form an alternating ring which encloses part of the gamma chain. F(1) is attached to F(0) by a central stalk formed by the gamma and epsilon chains, while a peripheral stalk is formed by the delta and b chains.

The protein localises to the cell membrane. Its function is as follows. F(1)F(0) ATP synthase produces ATP from ADP in the presence of a proton or sodium gradient. F-type ATPases consist of two structural domains, F(1) containing the extramembraneous catalytic core and F(0) containing the membrane proton channel, linked together by a central stalk and a peripheral stalk. During catalysis, ATP synthesis in the catalytic domain of F(1) is coupled via a rotary mechanism of the central stalk subunits to proton translocation. Functionally, this protein is part of the stalk that links CF(0) to CF(1). It either transmits conformational changes from CF(0) to CF(1) or is implicated in proton conduction. This is ATP synthase subunit delta from Pediococcus pentosaceus (strain ATCC 25745 / CCUG 21536 / LMG 10740 / 183-1w).